A 512-amino-acid polypeptide reads, in one-letter code: DNA damage-binding protein CMR1 (512 aa).

The tract at residues 32-96 (SQIKREAGVE…IPNVNDNQLL (65 aa)) is disordered. Basic and acidic residues predominate over residues 34–46 (IKREAGVEDEHLD). Positions 47–60 (RKRKKKAGSAKKAV) are enriched in basic residues. WD repeat units lie at residues 189–230 (LTAE…PEDE), 241–281 (LFTK…SEEI), 289–329 (DDPL…TEIN), 333–373 (LSDK…NKPE), 390–429 (DSRLSVSAVSYSPMDETLVCNGYDDTIRLFDVSGTLPEDL), 442–481 (GRWTSILKARFKLNMDVFAIANMKRAIDIYTSSGVQLAHL), and 482–512 (PTATVPAVISWHPTQNWVVGGNSSGKAFLFT).

This sequence belongs to the WD repeat DDB2/WDR76 family.

Its function is as follows. DNA-binding protein that binds to both single- and double-stranded DNA. Binds preferentially to UV-damaged DNA. May be involved in DNA-metabolic processes. In Kluyveromyces lactis (strain ATCC 8585 / CBS 2359 / DSM 70799 / NBRC 1267 / NRRL Y-1140 / WM37) (Yeast), this protein is DNA damage-binding protein CMR1.